The sequence spans 170 residues: tRNA-splicing endonuclease (170 aa).

Active-site residues include tyrosine 110, histidine 116, and lysine 147.

Belongs to the tRNA-intron endonuclease family. Archaeal short subfamily. In terms of assembly, homotetramer; although the tetramer contains four active sites, only two participate in the cleavage. Therefore, it should be considered as a dimer of dimers.

It carries out the reaction pretRNA = a 3'-half-tRNA molecule with a 5'-OH end + a 5'-half-tRNA molecule with a 2',3'-cyclic phosphate end + an intron with a 2',3'-cyclic phosphate and a 5'-hydroxyl terminus.. Its function is as follows. Endonuclease that removes tRNA introns. Cleaves pre-tRNA at the 5'- and 3'-splice sites to release the intron. The products are an intron and two tRNA half-molecules bearing 2',3' cyclic phosphate and 5'-OH termini. Recognizes a pseudosymmetric substrate in which 2 bulged loops of 3 bases are separated by a stem of 4 bp. This Pyrococcus abyssi (strain GE5 / Orsay) protein is tRNA-splicing endonuclease.